A 67-amino-acid polypeptide reads, in one-letter code: DNA-directed RNA polymerase subunit omega (67 aa).

Belongs to the RNA polymerase subunit omega family. The RNAP catalytic core consists of 2 alpha, 1 beta, 1 beta' and 1 omega subunit. When a sigma factor is associated with the core the holoenzyme is formed, which can initiate transcription.

It catalyses the reaction RNA(n) + a ribonucleoside 5'-triphosphate = RNA(n+1) + diphosphate. Functionally, promotes RNA polymerase assembly. Latches the N- and C-terminal regions of the beta' subunit thereby facilitating its interaction with the beta and alpha subunits. In Cupriavidus metallidurans (strain ATCC 43123 / DSM 2839 / NBRC 102507 / CH34) (Ralstonia metallidurans), this protein is DNA-directed RNA polymerase subunit omega.